The following is a 251-amino-acid chain: MAQESGINALGQFQLTTGFGAFGKAIEFTNSNEMMLLAAVIVTSLFVVALRQRALVPGRMQGLAEISYEFVHNMVLDTIGEEGKRFFPFVFTLFAFILIGNILGLFPYFFAFTSHIAITGALALFVFALSTLVGFWYHGIGFLKFFSPPGVPGWLLPLLIPIEIVSFLSRPISLSVRLFANITAGHVMWEVFAGFMLMLVSGLGAVGVVAAIIPLGLNIALTALEFLVAFLQAYVFAILTCLYLHDAIHMH.

6 consecutive transmembrane segments (helical) span residues 30-50 (NSNE…VVAL), 86-106 (FFPF…LGLF), 116-136 (IAIT…VGFW), 145-165 (FFSP…IEIV), 195-215 (FMLM…IIPL), and 219-239 (IALT…FAIL).

The protein belongs to the ATPase A chain family. In terms of assembly, F-type ATPases have 2 components, CF(1) - the catalytic core - and CF(0) - the membrane proton channel. CF(1) has five subunits: alpha(3), beta(3), gamma(1), delta(1), epsilon(1). CF(0) has three main subunits: a(1), b(2) and c(9-12). The alpha and beta chains form an alternating ring which encloses part of the gamma chain. CF(1) is attached to CF(0) by a central stalk formed by the gamma and epsilon chains, while a peripheral stalk is formed by the delta and b chains.

Its subcellular location is the cell inner membrane. Key component of the proton channel; it plays a direct role in the translocation of protons across the membrane. The protein is ATP synthase subunit a of Acidiphilium cryptum (strain JF-5).